The primary structure comprises 206 residues: Pyridoxine/pyridoxamine 5'-phosphate oxidase (206 aa).

Residues 53–58 (RMVLLK), 68–69 (YT), Lys-75, and Gln-97 each bind FMN. A substrate-binding site is contributed by Lys-58. Substrate contacts are provided by Tyr-115, Arg-119, and Ser-123. FMN-binding positions include 132 to 133 (QS) and Trp-177. 183–185 (RLH) contributes to the substrate binding site. An FMN-binding site is contributed by Arg-187.

It belongs to the pyridoxamine 5'-phosphate oxidase family. In terms of assembly, homodimer. Requires FMN as cofactor.

It carries out the reaction pyridoxamine 5'-phosphate + O2 + H2O = pyridoxal 5'-phosphate + H2O2 + NH4(+). It catalyses the reaction pyridoxine 5'-phosphate + O2 = pyridoxal 5'-phosphate + H2O2. It participates in cofactor metabolism; pyridoxal 5'-phosphate salvage; pyridoxal 5'-phosphate from pyridoxamine 5'-phosphate: step 1/1. The protein operates within cofactor metabolism; pyridoxal 5'-phosphate salvage; pyridoxal 5'-phosphate from pyridoxine 5'-phosphate: step 1/1. Its function is as follows. Catalyzes the oxidation of either pyridoxine 5'-phosphate (PNP) or pyridoxamine 5'-phosphate (PMP) into pyridoxal 5'-phosphate (PLP). The chain is Pyridoxine/pyridoxamine 5'-phosphate oxidase from Rhizobium etli (strain ATCC 51251 / DSM 11541 / JCM 21823 / NBRC 15573 / CFN 42).